The primary structure comprises 352 residues: Diacylglycerol acyltransferase/mycolyltransferase Ag85C (352 aa).

A signal peptide spans 1-37 (MSFIEKVRKLRGAAATMPRRLAIAAVGASLLSGVAVA). Residue 86 to 87 (LR) participates in substrate binding. Residues 102 to 112 (FEEFYQSGLSV) are fibronectin-binding. Substrate-binding residues include Ser-170 and Asn-198. Catalysis depends on Ser-170, which acts as the Nucleophile. Glu-274 is an active-site residue. Residues 276–279 (LTLR) and 306–308 (HSW) contribute to the substrate site. His-306 is an active-site residue. The segment at 332–352 (TAAPAQPAQPAQPAQPAQPAT) is disordered. A compositionally biased stretch (low complexity) spans 333–352 (AAPAQPAQPAQPAQPAQPAT).

This sequence belongs to the mycobacterial A85 antigen family. In terms of assembly, homodimer.

It is found in the secreted. It catalyses the reaction an acyl-CoA + a 1,2-diacyl-sn-glycerol = a triacyl-sn-glycerol + CoA. The enzyme catalyses 2 alpha,alpha'-trehalose 6-mycolate = alpha,alpha'-trehalose 6,6'-bismycolate + alpha,alpha-trehalose. Its function is as follows. The antigen 85 proteins (FbpA, FbpB, FbpC) are responsible for the high affinity of mycobacteria to fibronectin, a large adhesive glycoprotein, which facilitates the attachment of M.tuberculosis to murine alveolar macrophages (AMs). They also help to maintain the integrity of the cell wall by catalyzing the transfer of mycolic acids to cell wall arabinogalactan and through the synthesis of alpha,alpha-trehalose dimycolate (TDM, cord factor). They catalyze the transfer of a mycoloyl residue from one molecule of alpha,alpha-trehalose monomycolate (TMM) to another TMM, leading to the formation of TDM. The polypeptide is Diacylglycerol acyltransferase/mycolyltransferase Ag85C (fbpC) (Mycobacterium avium).